Reading from the N-terminus, the 99-residue chain is Putative pterin-4-alpha-carbinolamine dehydratase (99 aa).

It belongs to the pterin-4-alpha-carbinolamine dehydratase family.

The enzyme catalyses (4aS,6R)-4a-hydroxy-L-erythro-5,6,7,8-tetrahydrobiopterin = (6R)-L-erythro-6,7-dihydrobiopterin + H2O. The polypeptide is Putative pterin-4-alpha-carbinolamine dehydratase (Aquifex aeolicus (strain VF5)).